Reading from the N-terminus, the 1336-residue chain is Adhesion G protein-coupled receptor A2 (1336 aa).

The signal sequence occupies residues 1-33 (MGAGGRRMPVPPARLLLLPLLPCLLLLAPGTRG). The Extracellular segment spans residues 34–769 (APGCPVPIRG…AGGSGAGLHP (736 aa)). N-linked (GlcNAc...) asparagine glycosylation is found at Asn-84 and Asn-101. LRR repeat units lie at residues 85 to 106 (GTIT…SFLG), 109 to 130 (LLEK…AFLG), 133 to 154 (ELKR…TFQG), and 157 to 178 (RLLR…VFDE). N-linked (GlcNAc...) asparagine glycosylation is present at Asn-162. In terms of domain architecture, LRRCT spans 190-241 (EFLTCDCRLRWLLPWARNHSLQLSERTLCAYPSALHAHALSSLQESQLRCEG). One can recognise an Ig-like domain in the interval 247 to 344 (THYLIPSLRQ…GNTSKKVEIV (98 aa)). Cys-268 and Cys-328 form a disulfide bridge. A glycan (N-linked (GlcNAc...) asparagine) is linked at Asn-275. Residues 362–364 (RGD) carry the RGD motif. The GAIN-B domain maps to 594-757 (FRCTTGRPNI…AVLMELNAFP (164 aa)). N-linked (GlcNAc...) asparagine glycans are attached at residues Asn-602, Asn-691, and Asn-735. The segment at 711–757 (AAWWNQDGPGGWSSEGCRLRYSQPNVSSLYCQHLGNVAVLMELNAFP) is GPS. A disulfide bridge connects residues Cys-727 and Cys-741. Residues 770-790 (VVYPCTALLLLCLFSTIITYI) form a helical membrane-spanning segment. The Cytoplasmic portion of the chain corresponds to 791 to 805 (LNHSSIHVSRKGWHM). The helical transmembrane segment at 806–826 (LLNLCFHMAMTSAVFVGGVTL) threads the bilayer. At 827–830 (TNYQ) the chain is on the extracellular side. The helical transmembrane segment at 831 to 851 (MVCQAVGITLHYSSLSSLLWM) threads the bilayer. Over 852-884 (GVKARVLHKELSWRAPPLEEGEAAPPGPRPMLR) the chain is Cytoplasmic. Residues 885-905 (FYLIAGGIPLIICGITAAVNI) traverse the membrane as a helical segment. At 906–922 (HNYRDHSPYCWLVWRPS) the chain is on the extracellular side. A helical transmembrane segment spans residues 923–943 (LGAFYIPVALILPITWIYFLC). At 944 to 1016 (AGLHLRSHVA…DGVYSPGVQL (73 aa)) the chain is on the cytoplasmic side. The helical transmembrane segment at 1017-1037 (GALMTTHFLYLAMWACGALAV) threads the bilayer. At 1038 to 1044 (SQRWLPR) the chain is on the extracellular side. A helical membrane pass occupies residues 1045-1065 (VVCSCLYGVAASALGLFVFTH). At 1066–1336 (HCARRRDVRA…TGLWKSETTV (271 aa)) the chain is on the cytoplasmic side. Residues 1084-1095 (ASPSASHVPARA) are compositionally biased toward low complexity. Residues 1084 to 1310 (ASPSASHVPA…NGAPKGGKYE (227 aa)) are disordered. Position 1104 is a phosphoserine (Ser-1104). Low complexity predominate over residues 1110 to 1124 (GPASLKSSPSGSSGR). Positions 1133-1143 (TNLQVAQSQVC) are enriched in polar residues. Residues 1166–1186 (PRHHNNLHHGRRVHKSRAKGH) show a composition bias toward basic residues. The span at 1213–1234 (SSESGSLHNSPSDSYPGSSRNS) shows a compositional bias: polar residues. The short motif at 1333–1336 (ETTV) is the PDZ-binding element.

The protein belongs to the G-protein coupled receptor 2 family. Adhesion G-protein coupled receptor (ADGR) subfamily. As to quaternary structure, interacts with RECK; the interaction is direct. Interacts (via PDZ-binding motif) with DLG1 (via PDZ domains). The cleaved extracellular subunit interacts with the integrin heterodimer ITGAV:ITGB3. Glycosylated. In terms of processing, proteolytically cleaved into two subunits, an extracellular subunit and a seven-transmembrane subunit. Cleaved by thrombin (F2) and MMP1. Also cleaved by MMP9, with lower efficiency. Presence of the protein disulfide-isomerase P4HB at the cell surface is additionally required for shedding of the extracellular subunit, suggesting that the subunits are linked by disulfide bonds. Shedding is enhanced by the growth factor FGF2 and may promote cell survival during angiogenesis. In terms of tissue distribution, abundantly expressed in the vasculature of the developing embryo. Expression in normal adult tissues is specifically vascular with endothelial expression in CNS, including brain and retina and more widespread pericyte expression in the brain and organs, including the kidney, pancreas and corpus luteum.

The protein localises to the cell membrane. Its subcellular location is the cell projection. It localises to the filopodium. In terms of biological role, endothelial receptor which functions together with RECK to enable brain endothelial cells to selectively respond to Wnt7 signals (WNT7A or WNT7B). Plays a key role in Wnt7-specific responses, such as endothelial cell sprouting and migration in the forebrain and neural tube, and establishment of the blood-brain barrier. Acts as a Wnt7-specific coactivator of canonical Wnt signaling: required to deliver RECK-bound Wnt7 to frizzled by assembling a higher-order RECK-ADGRA2-Fzd-LRP5-LRP6 complex. ADGRA2-tethering function does not rely on its G-protein coupled receptor (GPCR) structure but instead on its combined capacity to interact with RECK extracellularly and recruit the Dishevelled scaffolding protein intracellularly. Binds to the glycosaminoglycans heparin, heparin sulfate, chondroitin sulfate and dermatan sulfate. In Mus musculus (Mouse), this protein is Adhesion G protein-coupled receptor A2.